A 287-amino-acid polypeptide reads, in one-letter code: tRNA uridine(34) hydroxylase (287 aa).

In terms of domain architecture, Rhodanese spans 132–226 (QGRPVVMLDT…YFEEVGGAHY (95 aa)). The Cysteine persulfide intermediate role is filled by cysteine 186.

The protein belongs to the TrhO family.

It carries out the reaction uridine(34) in tRNA + AH2 + O2 = 5-hydroxyuridine(34) in tRNA + A + H2O. Functionally, catalyzes oxygen-dependent 5-hydroxyuridine (ho5U) modification at position 34 in tRNAs. The protein is tRNA uridine(34) hydroxylase of Paraburkholderia phytofirmans (strain DSM 17436 / LMG 22146 / PsJN) (Burkholderia phytofirmans).